The following is a 329-amino-acid chain: UPF0158 protein CT_429 (329 aa).

The segment at 292-329 is disordered; the sequence is GYDSDGETGDFFDEEYDDEEEEIKPKKTTKRGRKKSRS. The span at 295–313 shows a compositional bias: acidic residues; sequence SDGETGDFFDEEYDDEEEE. Over residues 317 to 329 the composition is skewed to basic residues; that stretch reads KKTTKRGRKKSRS.

It belongs to the UPF0158 family.

The polypeptide is UPF0158 protein CT_429 (Chlamydia trachomatis serovar D (strain ATCC VR-885 / DSM 19411 / UW-3/Cx)).